The sequence spans 397 residues: Succinate--CoA ligase [ADP-forming] subunit beta (397 aa).

Residues Lys-9–Ala-254 enclose the ATP-grasp domain. ATP-binding positions include Lys-46, Gly-53–Gly-55, Glu-109, Ser-112, and Glu-117. Mg(2+)-binding residues include Asn-209 and Asp-223. Substrate-binding positions include Asn-274 and Gly-331–Met-333.

The protein belongs to the succinate/malate CoA ligase beta subunit family. As to quaternary structure, heterotetramer of two alpha and two beta subunits. It depends on Mg(2+) as a cofactor.

It catalyses the reaction succinate + ATP + CoA = succinyl-CoA + ADP + phosphate. The catalysed reaction is GTP + succinate + CoA = succinyl-CoA + GDP + phosphate. The protein operates within carbohydrate metabolism; tricarboxylic acid cycle; succinate from succinyl-CoA (ligase route): step 1/1. Its function is as follows. Succinyl-CoA synthetase functions in the citric acid cycle (TCA), coupling the hydrolysis of succinyl-CoA to the synthesis of either ATP or GTP and thus represents the only step of substrate-level phosphorylation in the TCA. The beta subunit provides nucleotide specificity of the enzyme and binds the substrate succinate, while the binding sites for coenzyme A and phosphate are found in the alpha subunit. The sequence is that of Succinate--CoA ligase [ADP-forming] subunit beta from Jannaschia sp. (strain CCS1).